Here is a 249-residue protein sequence, read N- to C-terminus: Probable septum site-determining protein MinC (249 aa).

The tract at residues P115–R144 is disordered. Over residues V118 to R139 the composition is skewed to pro residues.

It belongs to the MinC family. In terms of assembly, interacts with MinD and FtsZ.

In terms of biological role, cell division inhibitor that blocks the formation of polar Z ring septums. Rapidly oscillates between the poles of the cell to destabilize FtsZ filaments that have formed before they mature into polar Z rings. Prevents FtsZ polymerization. In Xanthomonas axonopodis pv. citri (strain 306), this protein is Probable septum site-determining protein MinC.